The chain runs to 209 residues: Uracil phosphoribosyltransferase (209 aa).

Residues Arg-79, Arg-104, and 131–139 (DPMLATGGS) each bind 5-phospho-alpha-D-ribose 1-diphosphate. Uracil is bound by residues Ile-194 and 199-201 (GDA). A 5-phospho-alpha-D-ribose 1-diphosphate-binding site is contributed by Asp-200.

The protein belongs to the UPRTase family. The cofactor is Mg(2+).

It catalyses the reaction UMP + diphosphate = 5-phospho-alpha-D-ribose 1-diphosphate + uracil. The protein operates within pyrimidine metabolism; UMP biosynthesis via salvage pathway; UMP from uracil: step 1/1. With respect to regulation, allosterically activated by GTP. Catalyzes the conversion of uracil and 5-phospho-alpha-D-ribose 1-diphosphate (PRPP) to UMP and diphosphate. In Geobacter sulfurreducens (strain ATCC 51573 / DSM 12127 / PCA), this protein is Uracil phosphoribosyltransferase.